Here is a 1652-residue protein sequence, read N- to C-terminus: MEGMALYLVAALLIGFPASSFGALYTFITPGVLRTDTEEKILVEAHGDNAPKQLDISVHDFPRKQKILYQTRVDMNPAGGMLVTPTITIPAKDLNKDSRQNQYVVVQVTAPGLRLEKVVLLSYQSGFVFIQTDKGIYTPGSPVRYRVFSMDHNMHRMDKTVIVEFQTPQGIVVSSNPVNPASSLIRPYNLPELVSFGTWKAVAKYENSPEESYTALFDVREYVLPGFEVRVQPSEKFLYIDGNTDFHVSITARYLYGKRVEGVAFVLFGVKIDGNKKSIPESLTRIPIIDGDGEATLERHTLSRRFQRLNDLVGHNLYVSVTVITDSGSDMVVTEQSGIHIVTSPYQISFTKTPKYFKPGMPYELMVYVTNPDGSPAANVPVVSESIHSKGTTLSDGTAKLILNTPLNIQSLSITVKTNHRDLPRERQAMKSMTATAYQTQGGSGNYLHIAITSTEIKPGDNLPVSFNVRGNANSLNQIQYFTYLILTKGKIFKVGRQPRGAGQNLVTMTLPITPDLIPSFRFLAYYQVGNSEIVADSVWVDVKDTCMGTLVVKGASSRDNRIQKPGAAMKIKLEGDPGARVGLVAVDKAVYVLSDEYKISQTKIWDTIEKSDFGCTAGSGQNNLGVFEDAGLALATSTSLNTKQRSDAKCPQPENRRRRRSVVLLDSKASKAAQFPDQALRKCCEDGMHENPMGYSCEKREKYIQEGDACKAAFLECCRYIKGIHDENKREDELFLARSDFEDEFFGEDNIISRSDFPESWLWLTENLNAVPNNEGISSKTVPFYLRDSITTWEVLAVSITPTKGICVAEPYEITVMKDFFIDLRLPYSVVKNEQVEVRAILYNYVDDDIDVRVELLHNPAFCSVATETQRYRTQVTIKALSSWAVPFVIVPLQQGLHDIEVRASVRGQLASDGVKKKLKVVPEGMRKDIVTVIELDPSTKGVGGTQEQLVKANELDGKVPDTEIETKISVQGDRVAQIVENSIDGNKLSHLIITPSGCGEQNMITMTPSVIATYYLDTTGQWETLGVDRRTEAVQQIKKGYAQQLVYKKADHSYAAFVNRDSSSWLTAYVVKVFAMATKVVPDISHEIICGGVKWLILNRQQPDGVFKENAPVIHGEMLGGTKGAEPEVSLTAFILIALLESRSICNEHINILESSINKAADYLLKKYEKLQRPYTTALTAYALAAAGLLNDDRVLMAASTERNRWEEHNAYTYNIEGTSYALLALLKMEKFAEANPVVRWLTDQKYYGGTYGQTQATVVGFQGLAEYEIAMPSHKDLNLDIVIKLPEREVPISYRIDATNALRAQTTETKLNEDFTVSASGDGKATMTILTVYNAQLREDANVCNQFHLEVSVERIDSNLKQAKGAKETLKLKICTRYLGEVDSTMTIIDVSMLTGFLPDAEDLTRLSKGVDRYISKFEIDNNMAQKGAVIIYLDKVSHSEDECLQFRIQKHFEVGFIQPGSVKVYSYYNLDEQCTRFYHPDKGTGLLNKICHGNVCRCAEETCSLLNQQKKIDLQLRIQKACEPNVDYVYKAKLLRIEEKDASDIYVMDVLEVIKGGTDRNPQAKPRQYVSQRKCQEALNLKVNNDYLIWGLSSDLWHKKDEISYLITRNTWIERWPNEDECQDEEFQNLCNDFTQLSNTLTIFGCPN.

The signal sequence occupies residues 1 to 22; the sequence is MEGMALYLVAALLIGFPASSFG. Residues Pro-519, Asp-542, Val-543, and Asp-545 each contribute to the Mg(2+) site. 12 cysteine pairs are disulfide-bonded: Cys-547/Cys-808, Cys-616/Cys-651, Cys-684/Cys-711, Cys-685/Cys-718, Cys-698/Cys-719, Cys-864/Cys-1502, Cys-1347/Cys-1478, Cys-1378/Cys-1447, Cys-1495/Cys-1500, Cys-1507/Cys-1579, Cys-1526/Cys-1650, and Cys-1626/Cys-1635. Positions 657–740 are excised as a propeptide; that stretch reads RRRRRSVVLL…REDELFLARS (84 aa). The tract at residues 661 to 739 is C3a-like domain; that stretch reads RSVVLLDSKA…KREDELFLAR (79 aa). Residues 684-719 form the Anaphylatoxin-like domain; sequence CCEDGMHENPMGYSCEKREKYIQEGDACKAAFLECC. The interval 743-754 is factor B binding site; sequence EDEFFGEDNIIS. Residues 992–1270 constitute a propeptide that is removed on maturation; that stretch reads HLIITPSGCG…VVGFQGLAEY (279 aa). The tract at residues 992–1270 is C3d-like domain; it reads HLIITPSGCG…VVGFQGLAEY (279 aa). The isoglutamyl cysteine thioester (Cys-Gln) cross-link spans 1000 to 1003; it reads CGEQ. The interval 1197-1260 is factor H binding site; it reads VLMAASTERN…GGTYGQTQAT (64 aa). One can recognise an NTR domain in the interval 1507-1650; it reads CSLLNQQKKI…LSNTLTIFGC (144 aa).

It belongs to the venom complement C3 homolog family. In terms of assembly, heterotrimer of alpha, beta and gamma chains; disulfide-linked. Is active with factor B in the presence of factor D. Post-translationally, first processed by the removal of 4 Arg residues by furin-type protease, forming two chains, alpha and gamma/beta precursor, linked by a disulfide bond. Probably, a cobrin-like protease cleaves the C3a-like domain and then the C3d-like domain, generating the mature venom factor (VF). Expressed by the venom gland.

Its subcellular location is the secreted. Its function is as follows. Complement-activating protein in venom. It is a structural and functional analog of complement component C3b, the activated form of C3. It binds factor B (CFB), which is subsequently cleaved by factor D (CFD) to form the bimolecular complex VF/Bb. VF/Bb is a C3/C5 convertase that cleaves both complement components C3 and C5. Structurally, it resembles the C3b degradation product C3c, which is not able to form a C3/C5 convertase. Unlike C3b/Bb, VF/Bb is a stable complex and completely resistant to the actions of complement regulatory factors H (CFH) and I (CFI). Therefore, VF continuously activates complement resulting in the depletion of complement activity. The polypeptide is Venom factor (Crotalus adamanteus (Eastern diamondback rattlesnake)).